Reading from the N-terminus, the 259-residue chain is Leucine-rich repeat-containing protein 3B (259 aa).

An N-terminal signal peptide occupies residues 1–33 (MNLVDLWLTRSLSMCLLLQSFVLMILCFHSASM). The LRRNT domain maps to 34 to 64 (CPKGCLCSSSGGLNVTCSNANLKEIPRDLPP). N47 carries an N-linked (GlcNAc...) asparagine glycan. 3 LRR repeats span residues 65-86 (ETVLLYLDSNQITSIPNEIFKD), 89-110 (QLRVLNLSKNGIEFIDEHAFKG), and 114-135 (TLQTLDLSDNRIQSVHKNAFNN). An N-linked (GlcNAc...) asparagine glycan is attached at N94. The LRRCT domain occupies 145–197 (NPWHCDCTLQQVLRSMVSNHETAHNVICKTSVLDEHAGRPFLNAANDADLCNL). Residues 205-225 (AMLVTMFGWFTMVISYVVYYV) traverse the membrane as a helical segment.

Belongs to the LRRC3 family.

It localises to the membrane. The sequence is that of Leucine-rich repeat-containing protein 3B (LRRC3B) from Bos taurus (Bovine).